We begin with the raw amino-acid sequence, 402 residues long: Tryptophan synthase beta chain (402 aa).

The residue at position 91 (Lys91) is an N6-(pyridoxal phosphate)lysine.

Belongs to the TrpB family. As to quaternary structure, tetramer of two alpha and two beta chains. Pyridoxal 5'-phosphate is required as a cofactor.

It carries out the reaction (1S,2R)-1-C-(indol-3-yl)glycerol 3-phosphate + L-serine = D-glyceraldehyde 3-phosphate + L-tryptophan + H2O. Its pathway is amino-acid biosynthesis; L-tryptophan biosynthesis; L-tryptophan from chorismate: step 5/5. The beta subunit is responsible for the synthesis of L-tryptophan from indole and L-serine. The chain is Tryptophan synthase beta chain (trpB) from Lactococcus lactis subsp. lactis (strain IL1403) (Streptococcus lactis).